We begin with the raw amino-acid sequence, 195 residues long: Imidazoleglycerol-phosphate dehydratase (195 aa).

Belongs to the imidazoleglycerol-phosphate dehydratase family.

The protein resides in the cytoplasm. It catalyses the reaction D-erythro-1-(imidazol-4-yl)glycerol 3-phosphate = 3-(imidazol-4-yl)-2-oxopropyl phosphate + H2O. Its pathway is amino-acid biosynthesis; L-histidine biosynthesis; L-histidine from 5-phospho-alpha-D-ribose 1-diphosphate: step 6/9. This chain is Imidazoleglycerol-phosphate dehydratase, found in Geobacillus sp. (strain WCH70).